The primary structure comprises 432 residues: Bouquet formation protein 4 (432 aa).

Residues Met1 to Asp21 form a disordered region. In terms of domain architecture, HTH APSES-type spans Glu38–Pro147. A DNA-binding region (H-T-H motif) is located at residues Ala73–Arg94. Low complexity-rich tracts occupy residues Ser139–Ala152 and Glu163–Ser172. 2 disordered regions span residues Ser139–Arg283 and Lys364–Asn384. Over residues Arg180 to Glu228 the composition is skewed to basic and acidic residues. Positions Gly229 to Ser241 are enriched in polar residues.

As to quaternary structure, interacts with rap1.

The protein localises to the cytoplasm. It localises to the nucleus. Its subcellular location is the nucleus inner membrane. Its function is as follows. Connects telomeres to the nuclear envelop (NE) during both vegetative growth and meiosis. This connection ensures clustering of telomeres to the spindle pole body (SPB) when cells enter meiotic prophase. In Schizosaccharomyces pombe (strain 972 / ATCC 24843) (Fission yeast), this protein is Bouquet formation protein 4 (bqt4).